A 286-amino-acid polypeptide reads, in one-letter code: Bifunctional protein FolD (286 aa).

NADP(+)-binding positions include glycine 165 to serine 167 and serine 190.

Belongs to the tetrahydrofolate dehydrogenase/cyclohydrolase family. In terms of assembly, homodimer.

The catalysed reaction is (6R)-5,10-methylene-5,6,7,8-tetrahydrofolate + NADP(+) = (6R)-5,10-methenyltetrahydrofolate + NADPH. It carries out the reaction (6R)-5,10-methenyltetrahydrofolate + H2O = (6R)-10-formyltetrahydrofolate + H(+). The protein operates within one-carbon metabolism; tetrahydrofolate interconversion. In terms of biological role, catalyzes the oxidation of 5,10-methylenetetrahydrofolate to 5,10-methenyltetrahydrofolate and then the hydrolysis of 5,10-methenyltetrahydrofolate to 10-formyltetrahydrofolate. The polypeptide is Bifunctional protein FolD (Staphylococcus epidermidis (strain ATCC 35984 / DSM 28319 / BCRC 17069 / CCUG 31568 / BM 3577 / RP62A)).